The primary structure comprises 279 residues: Pantothenate synthetase (279 aa).

30–37 (MGALHAGH) provides a ligand contact to ATP. Catalysis depends on His-37, which acts as the Proton donor. Gln-61 is a (R)-pantoate binding site. Gln-61 is a beta-alanine binding site. 147–150 (GEKD) lines the ATP pocket. Position 153 (Gln-153) interacts with (R)-pantoate. ATP is bound by residues Ala-176 and 184-187 (LSSR).

It belongs to the pantothenate synthetase family. Homodimer.

It is found in the cytoplasm. The catalysed reaction is (R)-pantoate + beta-alanine + ATP = (R)-pantothenate + AMP + diphosphate + H(+). Its pathway is cofactor biosynthesis; (R)-pantothenate biosynthesis; (R)-pantothenate from (R)-pantoate and beta-alanine: step 1/1. Functionally, catalyzes the condensation of pantoate with beta-alanine in an ATP-dependent reaction via a pantoyl-adenylate intermediate. The sequence is that of Pantothenate synthetase from Sphingopyxis alaskensis (strain DSM 13593 / LMG 18877 / RB2256) (Sphingomonas alaskensis).